The following is a 482-amino-acid chain: ATP synthase subunit beta (482 aa).

Residue 161–168 (GGAGVGKT) coordinates ATP.

Belongs to the ATPase alpha/beta chains family. As to quaternary structure, F-type ATPases have 2 components, CF(1) - the catalytic core - and CF(0) - the membrane proton channel. CF(1) has five subunits: alpha(3), beta(3), gamma(1), delta(1), epsilon(1). CF(0) has three main subunits: a(1), b(2) and c(9-12). The alpha and beta chains form an alternating ring which encloses part of the gamma chain. CF(1) is attached to CF(0) by a central stalk formed by the gamma and epsilon chains, while a peripheral stalk is formed by the delta and b chains.

It is found in the cell inner membrane. The enzyme catalyses ATP + H2O + 4 H(+)(in) = ADP + phosphate + 5 H(+)(out). In terms of biological role, produces ATP from ADP in the presence of a proton gradient across the membrane. The catalytic sites are hosted primarily by the beta subunits. The sequence is that of ATP synthase subunit beta from Anaeromyxobacter dehalogenans (strain 2CP-C).